The chain runs to 140 residues: Nucleoside diphosphate kinase (140 aa).

Residues Lys-9, Phe-57, Arg-85, Thr-91, Arg-102, and Asn-112 each contribute to the ATP site. The Pros-phosphohistidine intermediate role is filled by His-115.

It belongs to the NDK family. In terms of assembly, homotetramer. Mg(2+) is required as a cofactor.

It localises to the cytoplasm. The catalysed reaction is a 2'-deoxyribonucleoside 5'-diphosphate + ATP = a 2'-deoxyribonucleoside 5'-triphosphate + ADP. The enzyme catalyses a ribonucleoside 5'-diphosphate + ATP = a ribonucleoside 5'-triphosphate + ADP. Major role in the synthesis of nucleoside triphosphates other than ATP. The ATP gamma phosphate is transferred to the NDP beta phosphate via a ping-pong mechanism, using a phosphorylated active-site intermediate. The chain is Nucleoside diphosphate kinase from Chlorobium limicola (strain DSM 245 / NBRC 103803 / 6330).